A 201-amino-acid polypeptide reads, in one-letter code: Phosphatidylglycerophosphatase and protein-tyrosine phosphatase 1 (201 aa).

The transit peptide at 1-27 (MAATALLEAGLARVLFYPTLLYTLFRG) directs the protein to the mitochondrion. A Tyrosine-protein phosphatase domain is found at 37-188 (WYHRIDPTVL…LKEFHKQITA (152 aa)). Cys132 serves as the catalytic Phosphocysteine intermediate.

It belongs to the protein-tyrosine phosphatase family. Non-receptor class dual specificity subfamily. As to quaternary structure, interacts with STYXL1; the interaction inhibits PTPMT1 catalytic activity.

Its subcellular location is the mitochondrion inner membrane. It carries out the reaction a 1,2-diacyl-sn-glycero-3-phospho-(1'-sn-glycero-3'-phosphate) + H2O = a 1,2-diacyl-sn-glycero-3-phospho-(1'-sn-glycerol) + phosphate. The catalysed reaction is O-phospho-L-tyrosyl-[protein] + H2O = L-tyrosyl-[protein] + phosphate. It catalyses the reaction O-phospho-L-seryl-[protein] + H2O = L-seryl-[protein] + phosphate. The enzyme catalyses O-phospho-L-threonyl-[protein] + H2O = L-threonyl-[protein] + phosphate. It carries out the reaction 1,2-di-(9Z-octadecenoyl)-sn-glycero-3-phospho-(1'-sn-glycerol-3'-phosphate) + H2O = 1,2-di-(9Z-octadecenoyl)-sn-glycero-3-phospho-(1'-sn-glycerol) + phosphate. The catalysed reaction is 1,2-dioctanoyl-sn-glycero-3-phospho-(1D-myo-inositol-5-phosphate) + H2O = 1,2-dioctanoyl-sn-glycero-3-phospho-(1D-myo-inositol) + phosphate. It catalyses the reaction a 1-acyl-2-hexanoyl-sn-glycero-3-phospho-(1D-myo-inositol-5-phosphate) + H2O = a 1-acyl-2-hexanoyl-sn-glycero-3-phospho-(1D-myo-inositol) + phosphate. The enzyme catalyses 1,2-dibutyryl-sn-glycero-3-phospho-(1D-myo-inositol-5-phosphate) + H2O = 1,2-dibutyryl-sn-glycero-3-phospho-(1D-myo-inositol) + phosphate. Its pathway is phospholipid metabolism; phosphatidylglycerol biosynthesis; phosphatidylglycerol from CDP-diacylglycerol: step 2/2. Its function is as follows. Lipid phosphatase which dephosphorylates phosphatidylglycerophosphate (PGP) to phosphatidylglycerol (PG). PGP is an essential intermediate in the biosynthetic pathway of cardiolipin, a mitochondrial-specific phospholipid regulating the membrane integrity and activities of the organelle. Has also been shown to display phosphatase activity toward phosphoprotein substrates, specifically mediates dephosphorylation of mitochondrial proteins, thereby playing an essential role in ATP production. Has probably a preference for proteins phosphorylated on Ser and/or Thr residues compared to proteins phosphorylated on Tyr residues. Probably involved in regulation of insulin secretion in pancreatic beta cells. May prevent intrinsic apoptosis, probably by regulating mitochondrial membrane integrity. The polypeptide is Phosphatidylglycerophosphatase and protein-tyrosine phosphatase 1 (Homo sapiens (Human)).